Reading from the N-terminus, the 194-residue chain is Histone H1 (194 aa).

Alanine 1 carries the post-translational modification N-acetylalanine; partial. The span at 1–14 shows a compositional bias: low complexity; sequence AEVAPAPAAAAPAK. Disordered regions lie at residues 1–31 and 105–194; these read AEVAPAPAAAAPAKAPKKKAAAKPKKSGPAV and AKKP…AAKK. Residues 15–26 are compositionally biased toward basic residues; it reads APKKKAAAKPKK. One can recognise an H15 domain in the interval 27–100; it reads SGPAVGELAG…GASGSFKLNK (74 aa). A compositionally biased stretch (basic residues) spans 116–194; that stretch reads KAKKVAAKKP…KVKKPAAAKK (79 aa). Phosphoserine occurs at positions 145, 161, and 182.

This sequence belongs to the histone H1/H5 family.

The protein resides in the nucleus. It localises to the chromosome. Its function is as follows. Histones H1 are necessary for the condensation of nucleosome chains into higher-order structures. The sequence is that of Histone H1 from Salmo trutta (Brown trout).